The primary structure comprises 181 residues: SRP-independent targeting protein 2 (181 aa).

Residues 1–15 (MAGKAGRKQASSNAK) are Cytoplasmic-facing. The helical transmembrane segment at 16–36 (IIQGLYKQVSLFLGMAIVRLF) threads the bilayer. Residues 37–45 (ISRKVTIGQ) lie on the Lumenal side of the membrane. A helical membrane pass occupies residues 46 to 66 (WIKLVALNVPMFVALYIIVLS). Topologically, residues 67-89 (GKPKYDGNRVVKQGIDLNDNTNL) are cytoplasmic. The helical transmembrane segment at 90 to 110 (ISYFFDLIYLSLFGNIGIIAF) threads the bilayer. Residues 111–112 (RT) are Lumenal-facing. A helical membrane pass occupies residues 113 to 133 (FKFWWCLLLCPIYAGYKLYGL). Residues 134–181 (KNMFMPGAQQTQADNRSKNANEGQSKSKRQMKRERRGETDSKIKYKYR) lie on the Cytoplasmic side of the membrane. Polar residues predominate over residues 144 to 157 (TQADNRSKNANEGQ). A disordered region spans residues 144–181 (TQADNRSKNANEGQSKSKRQMKRERRGETDSKIKYKYR). The segment covering 168-181 (RRGETDSKIKYKYR) has biased composition (basic and acidic residues).

It belongs to the TMEM208 family. Interacts with SND1, PHO88/SND3 and the translocon complex subunit SEC61. ENV10/SND2 and PHO88/SND3 form a complex with the translocon in the endoplasmic reticulum membrane.

The protein localises to the endoplasmic reticulum membrane. Functions in the SND pathway, a SRP (signal recognition particle) and GET (guided entry of tail-anchored proteins) independent pathway for targeting a broad range of substrate proteins to the endoplasmic reticulum. SND functions in parallel to GET in targeting proteins with downstream hydrophobic motifs. Involved in vacuolar processing and morphology. The chain is SRP-independent targeting protein 2 from Saccharomyces cerevisiae (strain ATCC 204508 / S288c) (Baker's yeast).